Reading from the N-terminus, the 266-residue chain is N-acetylneuraminate lyase B (266 aa).

The aceneuramate site is built by Thr-51 and Thr-52. The active-site Proton donor is Tyr-143. The Schiff-base intermediate with substrate role is filled by Lys-173. Residues Ser-175, Gly-197, Asp-199, Glu-200, and Ser-216 each coordinate aceneuramate.

This sequence belongs to the DapA family. NanA subfamily. In terms of assembly, homotetramer.

It is found in the cytoplasm. The catalysed reaction is aceneuramate = aldehydo-N-acetyl-D-mannosamine + pyruvate. Its pathway is amino-sugar metabolism; N-acetylneuraminate degradation. Functionally, catalyzes the cleavage of N-acetylneuraminic acid (sialic acid) to form pyruvate and N-acetylmannosamine via a Schiff base intermediate. It prevents sialic acids from being recycled and returning to the cell surface. Involved in the N-glycolylneuraminic acid (Neu5Gc) degradation pathway. The sequence is that of N-acetylneuraminate lyase B (npl-b) from Xenopus laevis (African clawed frog).